A 434-amino-acid polypeptide reads, in one-letter code: UDP-N-acetylmuramoylalanine--D-glutamate ligase (434 aa).

Position 126-132 (126-132 (GTSGKTT)) interacts with ATP.

It belongs to the MurCDEF family.

The protein localises to the cytoplasm. The enzyme catalyses UDP-N-acetyl-alpha-D-muramoyl-L-alanine + D-glutamate + ATP = UDP-N-acetyl-alpha-D-muramoyl-L-alanyl-D-glutamate + ADP + phosphate + H(+). The protein operates within cell wall biogenesis; peptidoglycan biosynthesis. Functionally, cell wall formation. Catalyzes the addition of glutamate to the nucleotide precursor UDP-N-acetylmuramoyl-L-alanine (UMA). The polypeptide is UDP-N-acetylmuramoylalanine--D-glutamate ligase (Desulfovibrio desulfuricans (strain ATCC 27774 / DSM 6949 / MB)).